Here is a 194-residue protein sequence, read N- to C-terminus: A-type ATP synthase subunit E (194 aa).

It belongs to the V-ATPase E subunit family. As to quaternary structure, has multiple subunits with at least A(3), B(3), C, D, E, F, H, I and proteolipid K(x).

Its subcellular location is the cell membrane. Functionally, component of the A-type ATP synthase that produces ATP from ADP in the presence of a proton gradient across the membrane. This chain is A-type ATP synthase subunit E, found in Saccharolobus islandicus (strain Y.N.15.51 / Yellowstone #2) (Sulfolobus islandicus).